The following is a 703-amino-acid chain: Protein teflon (703 aa).

The C2H2-type 1 zinc-finger motif lies at 32–55 (MLCHFCKDIFTHLPEFMRHLQWSH). 4 disordered regions span residues 78–111 (SSED…PGSS), 140–161 (EQSY…ARKP), 205–239 (NDVS…MPSL), and 339–434 (SQQP…SKLE). Positions 84–94 (QSQANSCSSGD) are enriched in polar residues. Positions 148–161 (PDSRTEGFRCARKP) are enriched in basic and acidic residues. 2 stretches are compositionally biased toward polar residues: residues 339–352 (SQQP…NNAV) and 364–373 (SLTVISSSPI). 2 C2H2-type zinc fingers span residues 649–672 (YFCE…QSVH) and 677–700 (FTCS…KTVH).

It belongs to the Teflon family.

The protein localises to the nucleus. It is found in the chromosome. Its function is as follows. Specifically required in males for proper segregation of autosomal bivalents at meiosis I. Expression is required in the male germ line prior to spermatocyte stage S4. May have a role as a bridging molecule maintaining adhesion to hold autosome bivalents together via heterochromatic connections. This chain is Protein teflon, found in Drosophila persimilis (Fruit fly).